Consider the following 491-residue polypeptide: MTTQPAVPAAVIVLAAGEGTRMRSATPKVLHPLGGRPLVGHALRAARGTAPEHLVVVLRHQADRVREALAGDFPSVLVALQDDVPGTGRAVQCALEALPADLSGTVLVTYGDVPLLSSATLQRLAGAHAAGGNAVTVLTALLADPTGYGRVLRDGTGVTGIVEQKDATAEQLAVREVNSGVYAFEAAALRESLGRVGRDNAAGEVYLTDVLSLVRAAGGRVEALALEDEWEIRGVNDRAQLADLAAEANRRTLRRWMLAGVTIADPATTWIDADVELAPDVTIRPGVQLHGTTRVATGAVVGPDSTLTDVEVGAGALVERTHGSSAVVGEGAQVGPFAFLRPGTRLGAEGKIGTFVETKNATIGRGSKVPHLSYVGDATIGEHSNIGAASVFVNYDGVNKARTTVGDHVRMGSDNMYVAPVTVGDGAYSGAGTVIRKDVPAGALAINVAPQRNLEGWTLAKRPGTPAAEAAQRANDESTGTTASTDREIQP.

A pyrophosphorylase region spans residues 1-238 (MTTQPAVPAA…EWEIRGVNDR (238 aa)). UDP-N-acetyl-alpha-D-glucosamine is bound by residues 14–17 (LAAG), Lys28, Gln81, 86–87 (GT), 110–112 (YGD), Gly149, Glu163, Asn178, and Asn236. A Mg(2+)-binding site is contributed by Asp112. Asn236 lines the Mg(2+) pocket. Residues 239–259 (AQLADLAAEANRRTLRRWMLA) form a linker region. The tract at residues 260–491 (GVTIADPATT…TASTDREIQP (232 aa)) is N-acetyltransferase. The UDP-N-acetyl-alpha-D-glucosamine site is built by Arg341 and Lys359. The Proton acceptor role is filled by His371. 2 residues coordinate UDP-N-acetyl-alpha-D-glucosamine: Tyr374 and Asn385. Acetyl-CoA is bound by residues Ala388, 394 to 395 (NY), Ser413, and Ala431. The interval 460-491 (AKRPGTPAAEAAQRANDESTGTTASTDREIQP) is disordered.

The protein in the N-terminal section; belongs to the N-acetylglucosamine-1-phosphate uridyltransferase family. It in the C-terminal section; belongs to the transferase hexapeptide repeat family. In terms of assembly, homotrimer. Mg(2+) serves as cofactor.

Its subcellular location is the cytoplasm. It carries out the reaction alpha-D-glucosamine 1-phosphate + acetyl-CoA = N-acetyl-alpha-D-glucosamine 1-phosphate + CoA + H(+). The enzyme catalyses N-acetyl-alpha-D-glucosamine 1-phosphate + UTP + H(+) = UDP-N-acetyl-alpha-D-glucosamine + diphosphate. Its pathway is nucleotide-sugar biosynthesis; UDP-N-acetyl-alpha-D-glucosamine biosynthesis; N-acetyl-alpha-D-glucosamine 1-phosphate from alpha-D-glucosamine 6-phosphate (route II): step 2/2. The protein operates within nucleotide-sugar biosynthesis; UDP-N-acetyl-alpha-D-glucosamine biosynthesis; UDP-N-acetyl-alpha-D-glucosamine from N-acetyl-alpha-D-glucosamine 1-phosphate: step 1/1. It functions in the pathway bacterial outer membrane biogenesis; LPS lipid A biosynthesis. Catalyzes the last two sequential reactions in the de novo biosynthetic pathway for UDP-N-acetylglucosamine (UDP-GlcNAc). The C-terminal domain catalyzes the transfer of acetyl group from acetyl coenzyme A to glucosamine-1-phosphate (GlcN-1-P) to produce N-acetylglucosamine-1-phosphate (GlcNAc-1-P), which is converted into UDP-GlcNAc by the transfer of uridine 5-monophosphate (from uridine 5-triphosphate), a reaction catalyzed by the N-terminal domain. In Kineococcus radiotolerans (strain ATCC BAA-149 / DSM 14245 / SRS30216), this protein is Bifunctional protein GlmU.